A 187-amino-acid polypeptide reads, in one-letter code: MASTADFKNGLVLNIDGQLWQITEFQHVKPGKGPAFVRTKLKNVLSGKVVDKTFNAGVKVETATVDRRDTTYLYRDGDSFVFMDSQDYEQHHLSPELVGDAHRFLLEGMTVQVAFNEGAALYIELPVSVELEVTHTEPGLQGDRSSAGTKPATVETGAEIQVPLFINTGDRLKVDTRDASYLGRVNG.

This sequence belongs to the elongation factor P family.

The protein resides in the cytoplasm. It functions in the pathway protein biosynthesis; polypeptide chain elongation. Its function is as follows. Involved in peptide bond synthesis. Stimulates efficient translation and peptide-bond synthesis on native or reconstituted 70S ribosomes in vitro. Probably functions indirectly by altering the affinity of the ribosome for aminoacyl-tRNA, thus increasing their reactivity as acceptors for peptidyl transferase. This Mycobacteroides abscessus (strain ATCC 19977 / DSM 44196 / CCUG 20993 / CIP 104536 / JCM 13569 / NCTC 13031 / TMC 1543 / L948) (Mycobacterium abscessus) protein is Elongation factor P.